Consider the following 340-residue polypeptide: Ferredoxin--NADP reductase (340 aa).

7 residues coordinate FAD: D33, Q41, Y46, A86, F120, D286, and T327.

It belongs to the ferredoxin--NADP reductase type 2 family. In terms of assembly, homodimer. Requires FAD as cofactor.

The catalysed reaction is 2 reduced [2Fe-2S]-[ferredoxin] + NADP(+) + H(+) = 2 oxidized [2Fe-2S]-[ferredoxin] + NADPH. This Rickettsia conorii (strain ATCC VR-613 / Malish 7) protein is Ferredoxin--NADP reductase.